Consider the following 496-residue polypeptide: Coiled-coil domain-containing protein 77 (496 aa).

The tract at residues 1-42 (MDFSPPHGLRGGRSPSLQDTTISSSHTQKNGGDSTPLPPINE) is disordered. Residues 15–33 (PSLQDTTISSSHTQKNGGD) show a composition bias toward polar residues. The stretch at 51–113 (RELLEYYRKK…KALSDMQVYL (63 aa)) forms a coiled coil. Residues 170–208 (QRTVQSGDPFDRKVQRSGRAGVKQVPLKAPGKQDRTKAA) are disordered. Positions 214–495 (QILLLQVEAL…IYGLENELRI (282 aa)) form a coiled coil.

This chain is Coiled-coil domain-containing protein 77 (ccdc77), found in Xenopus laevis (African clawed frog).